The chain runs to 181 residues: Probable calcium-binding protein CML16 (181 aa).

The segment at 1 to 24 is disordered; it reads MSNTTEKKMPQQQQVERPTALAPA. EF-hand domains lie at 23 to 58, 63 to 98, 100 to 135, and 136 to 171; these read PADA…IAPP, AGGR…GRGD, EHEA…IGEG, and CSAE…DAAA. 19 residues coordinate Ca(2+): D36, D38, D40, R42, E47, D76, D78, D80, E87, D113, D115, D117, R119, E124, D149, D151, D153, C155, and E160.

Functionally, potential calcium sensor. This Oryza sativa subsp. japonica (Rice) protein is Probable calcium-binding protein CML16 (CML16).